The sequence spans 410 residues: MLYYLFEYFDKTLDVPGTGVFQYITFRSALAFMLSLLLSTIYGKRVINFLRRQQVGETVRELGLAGQNEKAGTPTMGGLIIIFATLVPVFLFARLHNIYIVLLIVTTLWMGTIGFVDDYIKIFKKDKQGLKGIFKVIGQVGLGIIVGAVLYFNPAVTVRTDTGKTDVFKTAANTTVVLPAPVEEKSTATTIPFVKNNEFDYAEVLSFMGDGYEKWAWLVFIPVVIFIITAVSNGANLTDGIDGLAAGTSAVSVLALGIFTFVSGNIIFSNYLNIMYIPNSGEMTVFISAFVGALIGFLWYNSFPASVFMGDTGSLTIGGIIAVLAIAVRKEILIVLFCGIFLAESASVIIQVTYFKYTKKRFGEGRRIFLMSPLHHHYQKKGYHESKIVTRFWIVAVMLAILSIVTLKLR.

Helical transmembrane passes span 23-43, 73-93, 96-116, 132-152, 215-235, 248-268, 285-305, 307-327, 332-352, and 387-407; these read YITF…TIYG, TPTM…FLFA, HNIY…IGFV, GIFK…VLYF, WAWL…SNGA, TSAV…NIIF, VFIS…SFPA, VFMG…LAIA, ILIV…IIQV, and KIVT…IVTL.

It belongs to the glycosyltransferase 4 family. MraY subfamily. Requires Mg(2+) as cofactor.

It localises to the cell inner membrane. The enzyme catalyses UDP-N-acetyl-alpha-D-muramoyl-L-alanyl-gamma-D-glutamyl-meso-2,6-diaminopimeloyl-D-alanyl-D-alanine + di-trans,octa-cis-undecaprenyl phosphate = di-trans,octa-cis-undecaprenyl diphospho-N-acetyl-alpha-D-muramoyl-L-alanyl-D-glutamyl-meso-2,6-diaminopimeloyl-D-alanyl-D-alanine + UMP. It participates in cell wall biogenesis; peptidoglycan biosynthesis. In terms of biological role, catalyzes the initial step of the lipid cycle reactions in the biosynthesis of the cell wall peptidoglycan: transfers peptidoglycan precursor phospho-MurNAc-pentapeptide from UDP-MurNAc-pentapeptide onto the lipid carrier undecaprenyl phosphate, yielding undecaprenyl-pyrophosphoryl-MurNAc-pentapeptide, known as lipid I. The sequence is that of Phospho-N-acetylmuramoyl-pentapeptide-transferase from Flavobacterium johnsoniae (strain ATCC 17061 / DSM 2064 / JCM 8514 / BCRC 14874 / CCUG 350202 / NBRC 14942 / NCIMB 11054 / UW101) (Cytophaga johnsonae).